A 221-amino-acid chain; its full sequence is DNA replication complex GINS protein SLD5 (221 aa).

This sequence belongs to the GINS4/SLD5 family. In terms of assembly, component of the GINS complex which is a heterotetramer of gins1/psf1, gins2/psf2, gins3/psf3 and gins4/sld5. Component of the CMG helicase complex, composed of the mcm2-7 complex, the GINS complex and cdc45.

It localises to the nucleus. The protein resides in the chromosome. Its subcellular location is the cytoplasm. Its function is as follows. Required for initiation of chromosomal DNA replication. Core component of CDC45-MCM-GINS (CMG) helicase, the molecular machine that unwinds template DNA during replication, and around which the replisome is built. The chain is DNA replication complex GINS protein SLD5 from Xenopus laevis (African clawed frog).